A 207-amino-acid chain; its full sequence is Ribonuclease HII (207 aa).

The RNase H type-2 domain occupies 17-207 (RIVAGVDEVG…SFKPLAAFVD (191 aa)). A divalent metal cation contacts are provided by aspartate 23, glutamate 24, and aspartate 120.

The protein belongs to the RNase HII family. It depends on Mn(2+) as a cofactor. Mg(2+) is required as a cofactor.

The protein localises to the cytoplasm. It catalyses the reaction Endonucleolytic cleavage to 5'-phosphomonoester.. Its function is as follows. Endonuclease that specifically degrades the RNA of RNA-DNA hybrids. The protein is Ribonuclease HII of Herpetosiphon aurantiacus (strain ATCC 23779 / DSM 785 / 114-95).